The chain runs to 153 residues: MLNVGATAPDFTLRDQNQQLVTLRGYRGAKNVLLVFFPLAFTGICQGELDQLRDHLPEFENDDSAALAISVGPPPTHKIWATQSGFTFPLLSDFWPHGAVSQAYGVFNEQAGIANRGTFVVDRSGIIRFAEMKQPGEVRDQRLWTDALAALTA.

Positions 2–153 (LNVGATAPDF…WTDALAALTA (152 aa)) constitute a Thioredoxin domain. Residue Cys-45 is part of the active site.

It belongs to the peroxiredoxin family. AhpE subfamily. In terms of assembly, homodimer. Forms both dimers and octamers; a tightly-associated dimer and a ring-like octamer.

The enzyme catalyses [mycoredoxin]-L-dithiol + a hydroperoxide = [mycoredoxin]-L-disulfide + an alcohol + H2O. Thiol-specific peroxidase that catalyzes the reduction of hydrogen peroxide and organic hydroperoxides to water and alcohols, respectively. Plays a role in cell protection against oxidative stress by detoxifying peroxides. May represent an important antioxidant defense against cytotoxic peroxides, especially peroxynitrite, which can be formed by activated macrophages during infection. This chain is Alkyl hydroperoxide reductase E (ahpE), found in Mycobacterium bovis (strain ATCC BAA-935 / AF2122/97).